A 155-amino-acid chain; its full sequence is 6,7-dimethyl-8-ribityllumazine synthase (155 aa).

5-amino-6-(D-ribitylamino)uracil contacts are provided by residues Phe24, Ala58 to Glu60, and Ala82 to Ile84. Ser87 to Thr88 contributes to the (2S)-2-hydroxy-3-oxobutyl phosphate binding site. Catalysis depends on His90, which acts as the Proton donor. Residue Phe115 coordinates 5-amino-6-(D-ribitylamino)uracil. Arg129 provides a ligand contact to (2S)-2-hydroxy-3-oxobutyl phosphate.

This sequence belongs to the DMRL synthase family.

The enzyme catalyses (2S)-2-hydroxy-3-oxobutyl phosphate + 5-amino-6-(D-ribitylamino)uracil = 6,7-dimethyl-8-(1-D-ribityl)lumazine + phosphate + 2 H2O + H(+). It participates in cofactor biosynthesis; riboflavin biosynthesis; riboflavin from 2-hydroxy-3-oxobutyl phosphate and 5-amino-6-(D-ribitylamino)uracil: step 1/2. Catalyzes the formation of 6,7-dimethyl-8-ribityllumazine by condensation of 5-amino-6-(D-ribitylamino)uracil with 3,4-dihydroxy-2-butanone 4-phosphate. This is the penultimate step in the biosynthesis of riboflavin. In Acetivibrio thermocellus (strain ATCC 27405 / DSM 1237 / JCM 9322 / NBRC 103400 / NCIMB 10682 / NRRL B-4536 / VPI 7372) (Clostridium thermocellum), this protein is 6,7-dimethyl-8-ribityllumazine synthase.